Reading from the N-terminus, the 259-residue chain is UPF0246 protein PSHAa2558 (259 aa).

This sequence belongs to the UPF0246 family.

In Pseudoalteromonas translucida (strain TAC 125), this protein is UPF0246 protein PSHAa2558.